The sequence spans 292 residues: Porphobilinogen deaminase (292 aa).

Residue C236 is modified to S-(dipyrrolylmethanemethyl)cysteine.

This sequence belongs to the HMBS family. Monomer. The cofactor is dipyrromethane.

The catalysed reaction is 4 porphobilinogen + H2O = hydroxymethylbilane + 4 NH4(+). Its pathway is porphyrin-containing compound metabolism; protoporphyrin-IX biosynthesis; coproporphyrinogen-III from 5-aminolevulinate: step 2/4. Its function is as follows. Tetrapolymerization of the monopyrrole PBG into the hydroxymethylbilane pre-uroporphyrinogen in several discrete steps. This Wolbachia sp. subsp. Drosophila simulans (strain wRi) protein is Porphobilinogen deaminase.